The primary structure comprises 127 residues: Large ribosomal subunit protein uL22 (127 aa).

Belongs to the universal ribosomal protein uL22 family. Part of the 50S ribosomal subunit.

This protein binds specifically to 23S rRNA; its binding is stimulated by other ribosomal proteins, e.g. L4, L17, and L20. It is important during the early stages of 50S assembly. It makes multiple contacts with different domains of the 23S rRNA in the assembled 50S subunit and ribosome. Its function is as follows. The globular domain of the protein is located near the polypeptide exit tunnel on the outside of the subunit, while an extended beta-hairpin is found that lines the wall of the exit tunnel in the center of the 70S ribosome. The polypeptide is Large ribosomal subunit protein uL22 (Methylorubrum extorquens (strain CM4 / NCIMB 13688) (Methylobacterium extorquens)).